The following is a 225-amino-acid chain: Transcriptional regulatory protein CssR (225 aa).

In terms of domain architecture, Response regulatory spans 4 to 117 (TIYLVEDEDN…ELIIRVQKLL (114 aa)). D52 carries the post-translational modification 4-aspartylphosphate. The ompR/PhoB-type DNA-binding region spans 129–224 (KNEIAVSSYR…IYGFGYRMMS (96 aa)).

Post-translationally, phosphorylated by CssS.

The protein localises to the cytoplasm. In terms of biological role, member of the two-component regulatory system CssS/CssR required to control the cellular response to secretion stress. The sequence is that of Transcriptional regulatory protein CssR (cssR) from Bacillus subtilis (strain 168).